The primary structure comprises 499 residues: Potassium voltage-gated channel subfamily A member 2 (499 aa).

A disordered region spans residues 1–27 (MTVATGDLTDGSVGFAGHPQDSYDPEP). The tract at residues 1-125 (MTVATGDLTD…YELGEEAMEI (125 aa)) is tetramerization domain. The Cytoplasmic segment spans residues 1-160 (MTVATGDLTD…LLFEYPESSG (160 aa)). Residues 161–182 (PARIIAIISVTVILISIVSFCL) traverse the membrane as a helical segment. Residues 183–221 (ETLPVFRDENEDMHGSGGNYYSYPNSTVRFQKSNTFTDP) lie on the Extracellular side of the membrane. A glycan (N-linked (GlcNAc...) asparagine) is linked at Asn207. A helical transmembrane segment spans residues 222 to 243 (FFIVETLCIIWFSFEFLVRFLA). Cys244 carries the S-palmitoyl cysteine lipid modification. Over 244–254 (CPSKAVFFTNL) the chain is Cytoplasmic. A helical membrane pass occupies residues 255–275 (MNIIDIVAIIPYFITLGTELA). Residues 276-289 (EKTEDGQQGQQAMS) lie on the Extracellular side of the membrane. Residues 290-310 (LAILRVIRLVRVFRIFKLSRH) form a helical; Voltage-sensor membrane-spanning segment. The Cytoplasmic segment spans residues 311-325 (SKGLQILGQTLNASM). The S4-S5 linker stretch occupies residues 312 to 325 (KGLQILGQTLNASM). Residues 326–347 (RELGLLIFFLFIGVILFSSAVF) traverse the membrane as a helical segment. The Extracellular segment spans residues 348–361 (FAEADERDSQFPSI). Residues 362–373 (PDAFWWAVVSMT) constitute an intramembrane region (helical). Positions 374 to 379 (TVGYGD) match the Selectivity filter motif. The stretch at 374 to 381 (TVGYGDMV) is an intramembrane region. Topologically, residues 382 to 388 (PTTIGGK) are extracellular. The helical transmembrane segment at 389–417 (IVGSLCAIAGVLTIALPVPVIVSNFNYFY) threads the bilayer. Over 418-499 (HRETEGEEQA…VNITKMLTDV (82 aa)) the chain is Cytoplasmic. Positions 497–499 (TDV) match the PDZ-binding motif.

Belongs to the potassium channel family. A (Shaker) (TC 1.A.1.2) subfamily. Kv1.2/KCNA2 sub-subfamily. In terms of assembly, homotetramer and heterotetramer with other family members. In terms of tissue distribution, detected in tadpole brain and spinal cord.

It is found in the cell membrane. It carries out the reaction K(+)(in) = K(+)(out). In terms of biological role, voltage-gated potassium channel that mediates transmembrane potassium transport in excitable membranes, primarily in the brain and central nervous system. Prevents aberrant action potential firing and regulates neuronal output. Forms tetrameric potassium-selective channels through which potassium ions pass in accordance with their electrochemical gradient. The channel alternates between opened and closed conformations in response to the voltage difference across the membrane. Can form functional homotetrameric channels and heterotetrameric channels with other family members; the channels characteristics depend critically on the types of channel-forming alpha subunits that are present. Channel properties are modulated by cytoplasmic beta subunits that regulate the subcellular location of the alpha subunits. In vivo, membranes probably contain a mixture of heteromeric potassium channel complexes, making it difficult to assign currents observed in intact tissues to any particular potassium channel family member. Homotetrameric KCNA2 forms a delayed-rectifier potassium channel that opens in response to membrane depolarization, followed by slow spontaneous channel closure. Regulates neuronal excitability and plays a role as pacemaker in the regulation of neuronal action potentials. KCNA2-containing channels play a presynaptic role and prevent hyperexcitability and aberrant action potential firing. Response to toxins that are selective for KCNA2-containing potassium channels suggests that in Purkinje cells, dendritic subthreshold KCNA2-containing potassium channels prevent random spontaneous calcium spikes, suppressing dendritic hyperexcitability without hindering the generation of somatic action potentials, and thereby play an important role in motor coordination. Plays a role in the induction of long-term potentiation of neuron excitability in the CA3 layer of the hippocampus. The polypeptide is Potassium voltage-gated channel subfamily A member 2 (kcna2) (Xenopus laevis (African clawed frog)).